A 176-amino-acid polypeptide reads, in one-letter code: NAD(P)H-quinone oxidoreductase subunit 6, chloroplastic (176 aa).

The next 5 membrane-spanning stretches (helical) occupy residues 10 to 30 (FLLV…ILFT), 33 to 53 (IFSA…YIIA), 61 to 81 (AQLL…VMFI), 92 to 112 (LFTL…FLLI), and 152 to 172 (FFPP…GAIA).

It belongs to the complex I subunit 6 family. NDH is composed of at least 16 different subunits, 5 of which are encoded in the nucleus.

Its subcellular location is the plastid. It localises to the chloroplast thylakoid membrane. It catalyses the reaction a plastoquinone + NADH + (n+1) H(+)(in) = a plastoquinol + NAD(+) + n H(+)(out). The enzyme catalyses a plastoquinone + NADPH + (n+1) H(+)(in) = a plastoquinol + NADP(+) + n H(+)(out). In terms of biological role, NDH shuttles electrons from NAD(P)H:plastoquinone, via FMN and iron-sulfur (Fe-S) centers, to quinones in the photosynthetic chain and possibly in a chloroplast respiratory chain. The immediate electron acceptor for the enzyme in this species is believed to be plastoquinone. Couples the redox reaction to proton translocation, and thus conserves the redox energy in a proton gradient. The chain is NAD(P)H-quinone oxidoreductase subunit 6, chloroplastic (ndhG) from Fagopyrum esculentum subsp. ancestrale (Wild buckwheat).